The sequence spans 506 residues: Maturase K (506 aa).

It belongs to the intron maturase 2 family. MatK subfamily.

The protein resides in the plastid. It localises to the chloroplast. Usually encoded in the trnK tRNA gene intron. Probably assists in splicing its own and other chloroplast group II introns. The sequence is that of Maturase K from Trifolium gracilentum (Pinpoint clover).